The following is a 77-amino-acid chain: Structural DNA-binding protein p10 (77 aa).

The span at 1 to 12 shows a compositional bias: polar residues; it reads MPTKAGTKSTAN. Residues 1-38 form a disordered region; it reads MPTKAGTKSTANKKTTKGPSKSGSAKGHTGKTHATALH. Residues 17-27 are compositionally biased toward low complexity; that stretch reads KGPSKSGSAKG.

It belongs to the asfivirus P10 family.

The protein resides in the virion. May play a role in genome packaging through direct interaction with viral DNA. Binds to ssDNA and dsDNA with the same apparent affinity in vitro. This is Structural DNA-binding protein p10 from Ornithodoros (relapsing fever ticks).